Here is a 365-residue protein sequence, read N- to C-terminus: MIKFLSTFMLLLVTTVVQAERIRDLTSVQGVRQNSLIGYGLVVGLDGTGDQTTQTPFTTQTLNNMLSQLGITVPAGTNMQLKNVAAVMVTASLPPFARQGQTIDVVVSSMGNAKSLRGGTLLMTPLKGVDSQVYALAQGNILVGGAGASAGGSSVQVNQLNGGRITNGAIIERELPSQFGAGNTLNLQLNDEDFAMAQQIADTINRARGYGSATALDSRTIQVNVPSGNSSQVRFLADIQNMQVNVTPQDAKVVINSRTGSVVMNREVTLDSCAVAQGNLSVTVNRQANVSQPDTPFGGGQTVVTPQTQIDLRQSGGSLQSVRSSANLNNVVRALNALGATPMDLMSILQSMQSAGCLRAKLEII.

The N-terminal stretch at 1–19 (MIKFLSTFMLLLVTTVVQA) is a signal peptide.

The protein belongs to the FlgI family. In terms of assembly, the basal body constitutes a major portion of the flagellar organelle and consists of four rings (L,P,S, and M) mounted on a central rod.

The protein localises to the periplasm. Its subcellular location is the bacterial flagellum basal body. Functionally, assembles around the rod to form the L-ring and probably protects the motor/basal body from shearing forces during rotation. In Escherichia fergusonii (strain ATCC 35469 / DSM 13698 / CCUG 18766 / IAM 14443 / JCM 21226 / LMG 7866 / NBRC 102419 / NCTC 12128 / CDC 0568-73), this protein is Flagellar P-ring protein.